We begin with the raw amino-acid sequence, 683 residues long: Receptor-like serine/threonine-protein kinase At2g45590 (683 aa).

Positions 1–21 (MPSRLSPPDIPPLQPTPTVSD) are disordered. At 1 to 30 (MPSRLSPPDIPPLQPTPTVSDGHHRFQTLP) the chain is on the extracellular side. Residues 31–51 (LIIAGSLTLTGVLLILVTLLI) traverse the membrane as a helical segment. The Cytoplasmic segment spans residues 52–683 (YRRLYRNRTA…FPFKSRKKAR (632 aa)). A Protein kinase domain is found at 92–664 (FSESTHLGHG…GVSEPPHLPF (573 aa)). Residues 98-106 (LGHGGFGSV) and Lys-121 contribute to the ATP site. Residue Asp-223 is the Proton acceptor of the active site. A disordered region spans residues 406–436 (ERPSNNKEWINNGDGSSSVSKKKKKEKKRKP). The span at 411–424 (NKEWINNGDGSSSV) shows a compositional bias: polar residues. The segment covering 425 to 436 (SKKKKKEKKRKP) has biased composition (basic residues).

The protein belongs to the protein kinase superfamily. Ser/Thr protein kinase family.

It localises to the cell membrane. The catalysed reaction is L-seryl-[protein] + ATP = O-phospho-L-seryl-[protein] + ADP + H(+). It carries out the reaction L-threonyl-[protein] + ATP = O-phospho-L-threonyl-[protein] + ADP + H(+). In Arabidopsis thaliana (Mouse-ear cress), this protein is Receptor-like serine/threonine-protein kinase At2g45590.